Here is a 116-residue protein sequence, read N- to C-terminus: Ig heavy chain V region 441 (116 aa).

An N-terminal signal peptide occupies residues 1–18 (MDFGLIFFIVALLKGVQC). Residues 19-116 (EVKLLESGGG…EDTALYYCAR (98 aa)) enclose the Ig-like domain.

In Mus musculus (Mouse), this protein is Ig heavy chain V region 441.